We begin with the raw amino-acid sequence, 440 residues long: 3-phosphoshikimate 1-carboxyvinyltransferase (440 aa).

3-phosphoshikimate is bound by residues lysine 26, serine 27, and arginine 31. Lysine 26 contributes to the phosphoenolpyruvate binding site. Phosphoenolpyruvate is bound by residues glycine 99 and arginine 127. Residues serine 172, glutamine 174, aspartate 320, and lysine 347 each coordinate 3-phosphoshikimate. Phosphoenolpyruvate is bound at residue glutamine 174. Catalysis depends on aspartate 320, which acts as the Proton acceptor. 2 residues coordinate phosphoenolpyruvate: arginine 351 and arginine 392.

Belongs to the EPSP synthase family. Monomer.

It is found in the cytoplasm. It catalyses the reaction 3-phosphoshikimate + phosphoenolpyruvate = 5-O-(1-carboxyvinyl)-3-phosphoshikimate + phosphate. Its pathway is metabolic intermediate biosynthesis; chorismate biosynthesis; chorismate from D-erythrose 4-phosphate and phosphoenolpyruvate: step 6/7. Catalyzes the transfer of the enolpyruvyl moiety of phosphoenolpyruvate (PEP) to the 5-hydroxyl of shikimate-3-phosphate (S3P) to produce enolpyruvyl shikimate-3-phosphate and inorganic phosphate. The protein is 3-phosphoshikimate 1-carboxyvinyltransferase of Xanthomonas oryzae pv. oryzae (strain MAFF 311018).